The following is a 473-amino-acid chain: ATP synthase subunit beta (473 aa).

153–160 (GGAGVGKT) serves as a coordination point for ATP.

The protein belongs to the ATPase alpha/beta chains family. As to quaternary structure, F-type ATPases have 2 components, CF(1) - the catalytic core - and CF(0) - the membrane proton channel. CF(1) has five subunits: alpha(3), beta(3), gamma(1), delta(1), epsilon(1). CF(0) has three main subunits: a(1), b(2) and c(9-12). The alpha and beta chains form an alternating ring which encloses part of the gamma chain. CF(1) is attached to CF(0) by a central stalk formed by the gamma and epsilon chains, while a peripheral stalk is formed by the delta and b chains.

The protein resides in the cell inner membrane. It carries out the reaction ATP + H2O + 4 H(+)(in) = ADP + phosphate + 5 H(+)(out). Its function is as follows. Produces ATP from ADP in the presence of a proton gradient across the membrane. The catalytic sites are hosted primarily by the beta subunits. The chain is ATP synthase subunit beta from Rickettsia akari (strain Hartford).